A 396-amino-acid polypeptide reads, in one-letter code: 1-deoxy-D-xylulose 5-phosphate reductoisomerase (396 aa).

NADPH is bound by residues T13, G14, S15, I16, and N127. Residue K128 coordinates 1-deoxy-D-xylulose 5-phosphate. NADPH is bound at residue E129. D153 contributes to the Mn(2+) binding site. S154, E155, S184, and H207 together coordinate 1-deoxy-D-xylulose 5-phosphate. Residue E155 coordinates Mn(2+). G213 is a binding site for NADPH. The 1-deoxy-D-xylulose 5-phosphate site is built by S220, N225, K226, and E229. E229 contributes to the Mn(2+) binding site.

It belongs to the DXR family. Requires Mg(2+) as cofactor. The cofactor is Mn(2+).

It catalyses the reaction 2-C-methyl-D-erythritol 4-phosphate + NADP(+) = 1-deoxy-D-xylulose 5-phosphate + NADPH + H(+). It functions in the pathway isoprenoid biosynthesis; isopentenyl diphosphate biosynthesis via DXP pathway; isopentenyl diphosphate from 1-deoxy-D-xylulose 5-phosphate: step 1/6. Catalyzes the NADPH-dependent rearrangement and reduction of 1-deoxy-D-xylulose-5-phosphate (DXP) to 2-C-methyl-D-erythritol 4-phosphate (MEP). The polypeptide is 1-deoxy-D-xylulose 5-phosphate reductoisomerase (Pseudomonas aeruginosa (strain UCBPP-PA14)).